The chain runs to 314 residues: Splicing factor YJU2 (314 aa).

Residues C43, C46, C80, and C83 each contribute to the Zn(2+) site. Disordered stretches follow at residues 178–238 and 253–314; these read MSQE…NEVP and LAGL…DSDS. Positions 200-209 are enriched in basic and acidic residues; the sequence is EEARHRRLLE. Phosphoserine is present on residues S211, S213, and S220. Over residues 222–232 the composition is skewed to low complexity; it reads PRAAARPNPTA. The span at 290 to 302 shows a compositional bias: polar residues; the sequence is PTPQTPGTSSLSQ. Residues S309, S312, and S314 each carry the phosphoserine modification.

It belongs to the CWC16 family. YJU2 subfamily. As to quaternary structure, component of the spliceosome. Present in the activated B complex, the catalytically activated B* complex which catalyzes the branching, the catalytic step 1 C complex catalyzing the exon ligation, and the postcatalytic P complex containing the ligated exons (mRNA) and the excised lariat intron.

The protein resides in the nucleus. Its function is as follows. Part of the spliceosome which catalyzes two sequential transesterification reactions, first the excision of the non-coding intron from pre-mRNA and then the ligation of the coding exons to form the mature mRNA. Plays a role in stabilizing the structure of the spliceosome catalytic core and docking of the branch helix into the active site, producing 5'-exon and lariat intron-3'-intermediates. May protect cells from TP53-dependent apoptosis upon dsDNA break damage through association with PRP19-CD5L complex. This Mus musculus (Mouse) protein is Splicing factor YJU2.